Reading from the N-terminus, the 616-residue chain is Auxin efflux carrier component 4 (616 aa).

Topologically, residues 1–7 (MITWHDL) are extracellular. Residues 8–28 (YTVLTAVVPLYVAMILAYGSV) traverse the membrane as a helical segment. Over 29-38 (QWWKIFSPDQ) the chain is Cytoplasmic. Residues 39-59 (CSGINRFVAIFAVPLLSFHFI) traverse the membrane as a helical segment. A (indol-3-yl)acetate-binding site is contributed by Val-51. Residues 60–70 (STNDPYAMNFR) are Extracellular-facing. The chain crosses the membrane as a helical span at residues 71 to 91 (FVAADTLQKIIMLVLLALWAN). Residues 92-101 (LTKNGSLEWM) are Cytoplasmic-facing. A helical transmembrane segment spans residues 102 to 122 (ITIFSLSTLPNTLVMGIPLLI). 2 residues coordinate (indol-3-yl)acetate: Asn-112 and Leu-114. Topologically, residues 123–131 (AMYGTYAGS) are extracellular. The chain crosses the membrane as a helical span at residues 132–152 (LMVQVVVLQCIIWYTLLLFLF). Residue Tyr-145 coordinates (indol-3-yl)acetate. At 153–476 (EYRGAKLLIM…LIRNPNTYSS (324 aa)) the chain is on the cytoplasmic side. Phosphoserine is present on residues Ser-223, Ser-240, and Ser-280. Residues 302-343 (AAGSYPAPNPEFSTGTGVSTKPNKIPKENQQQLQEKDSKASH) form a disordered region. Polar residues predominate over residues 312–334 (EFSTGTGVSTKPNKIPKENQQQL). Ser-358 and Ser-395 each carry phosphoserine. Positions 390-411 (DQPRKSNARGGGDDIGGLDSGE) are disordered. Positions 398 to 409 (RGGGDDIGGLDS) are enriched in gly residues. Residues 477–497 (LIGLIWALVAYRWHVAMPKIL) traverse the membrane as a helical segment. Topologically, residues 498 to 500 (QQS) are extracellular. Residues 501–521 (ISILSDAGLGMAMFSLGLFMA) form a helical membrane-spanning segment. At 522 to 535 (LQPKIIACGNSVAT) the chain is on the cytoplasmic side. Residues 536 to 556 (FAMAVRFITGPAIMAVAGIAI) form a helical membrane-spanning segment. Over 557-561 (GLHGD) the chain is Extracellular. Residues 562-582 (LLRIAIVQAALPQGIVPFVFA) traverse the membrane as a helical segment. Residues Ile-576 and Val-577 each contribute to the (indol-3-yl)acetate site. At 583–595 (KEYNVHPTILSTG) the chain is on the cytoplasmic side. Residues 596-616 (VIFGMLIALPITLVYYILLGL) form a helical membrane-spanning segment.

It belongs to the auxin efflux carrier (TC 2.A.69.1) family. As to quaternary structure, homodimer. As to expression, expressed in the quiescent center precursors and surrounding cells. Present in columella cells of primary roots. Detected in pollen.

It is found in the cell membrane. Acts as a component of the auxin efflux carrier. Plays a role in generating a sink for auxin into columella cells. Maintains the endogenous auxin gradient, which is essential for correct root patterning. Involved in EXO70A3-regulated gravitropic responses in columella cells and in root system architecture (RSA). Together with PIN3 and PIN7, involved in the connective auxin transport (CAT) that ensures communication across the shoot system, and modulates strigolactone-mediated shoot branching control. The abcb19 pin3 pin4 pin7 quadruple mutant exhibits an additive phenotype on strigolactone-mediated bud outgrowth responses and shoot branching control. This chain is Auxin efflux carrier component 4, found in Arabidopsis thaliana (Mouse-ear cress).